The primary structure comprises 342 residues: Holliday junction branch migration complex subunit RuvB (342 aa).

The large ATPase domain (RuvB-L) stretch occupies residues 4–182 (TDRLLSAGRR…FGIPIRLQFY (179 aa)). Residues Leu21, Arg22, Gly63, Lys66, Thr67, Thr68, Arg172, Tyr182, and Arg219 each contribute to the ATP site. Thr67 lines the Mg(2+) pocket. The interval 183–253 (TVEELERVVS…VADQSLNRLE (71 aa)) is small ATPAse domain (RuvB-S). The interval 256–342 (NLGLDAMDRR…EAGQDGLFDV (87 aa)) is head domain (RuvB-H). Residues Arg292, Arg311, and Arg316 each contribute to the DNA site.

This sequence belongs to the RuvB family. Homohexamer. Forms an RuvA(8)-RuvB(12)-Holliday junction (HJ) complex. HJ DNA is sandwiched between 2 RuvA tetramers; dsDNA enters through RuvA and exits via RuvB. An RuvB hexamer assembles on each DNA strand where it exits the tetramer. Each RuvB hexamer is contacted by two RuvA subunits (via domain III) on 2 adjacent RuvB subunits; this complex drives branch migration. In the full resolvosome a probable DNA-RuvA(4)-RuvB(12)-RuvC(2) complex forms which resolves the HJ.

It is found in the cytoplasm. It carries out the reaction ATP + H2O = ADP + phosphate + H(+). The RuvA-RuvB-RuvC complex processes Holliday junction (HJ) DNA during genetic recombination and DNA repair, while the RuvA-RuvB complex plays an important role in the rescue of blocked DNA replication forks via replication fork reversal (RFR). RuvA specifically binds to HJ cruciform DNA, conferring on it an open structure. The RuvB hexamer acts as an ATP-dependent pump, pulling dsDNA into and through the RuvAB complex. RuvB forms 2 homohexamers on either side of HJ DNA bound by 1 or 2 RuvA tetramers; 4 subunits per hexamer contact DNA at a time. Coordinated motions by a converter formed by DNA-disengaged RuvB subunits stimulates ATP hydrolysis and nucleotide exchange. Immobilization of the converter enables RuvB to convert the ATP-contained energy into a lever motion, pulling 2 nucleotides of DNA out of the RuvA tetramer per ATP hydrolyzed, thus driving DNA branch migration. The RuvB motors rotate together with the DNA substrate, which together with the progressing nucleotide cycle form the mechanistic basis for DNA recombination by continuous HJ branch migration. Branch migration allows RuvC to scan DNA until it finds its consensus sequence, where it cleaves and resolves cruciform DNA. The sequence is that of Holliday junction branch migration complex subunit RuvB from Rhizorhabdus wittichii (strain DSM 6014 / CCUG 31198 / JCM 15750 / NBRC 105917 / EY 4224 / RW1) (Sphingomonas wittichii).